The chain runs to 222 residues: 7-cyano-7-deazaguanine synthase (222 aa).

8-18 (LSGGMDSTTAA) contributes to the ATP binding site. Residues Cys187, Cys195, Cys198, and Cys201 each contribute to the Zn(2+) site.

It belongs to the QueC family. Zn(2+) serves as cofactor.

It carries out the reaction 7-carboxy-7-deazaguanine + NH4(+) + ATP = 7-cyano-7-deazaguanine + ADP + phosphate + H2O + H(+). Its pathway is purine metabolism; 7-cyano-7-deazaguanine biosynthesis. Functionally, catalyzes the ATP-dependent conversion of 7-carboxy-7-deazaguanine (CDG) to 7-cyano-7-deazaguanine (preQ(0)). This Nautilia profundicola (strain ATCC BAA-1463 / DSM 18972 / AmH) protein is 7-cyano-7-deazaguanine synthase.